The sequence spans 92 residues: MNKMTPEEIETALKPIADWQLSEADGATAIERVFRFDDFVQAIAFVNKVAERAETAGHHPDIHIHYNRVRLVLSTHDAGGVTSKDLEMAAAL.

This sequence belongs to the pterin-4-alpha-carbinolamine dehydratase family.

The enzyme catalyses (4aS,6R)-4a-hydroxy-L-erythro-5,6,7,8-tetrahydrobiopterin = (6R)-L-erythro-6,7-dihydrobiopterin + H2O. This chain is Putative pterin-4-alpha-carbinolamine dehydratase 2, found in Gloeobacter violaceus (strain ATCC 29082 / PCC 7421).